A 548-amino-acid polypeptide reads, in one-letter code: Chaperonin GroEL (548 aa).

ATP is bound by residues 30-33 (TLGP), Lys-51, 87-91 (DGTTT), Gly-415, 479-481 (NAA), and Asp-495.

Belongs to the chaperonin (HSP60) family. In terms of assembly, forms a cylinder of 14 subunits composed of two heptameric rings stacked back-to-back. Interacts with the co-chaperonin GroES.

It localises to the cytoplasm. It carries out the reaction ATP + H2O + a folded polypeptide = ADP + phosphate + an unfolded polypeptide.. Together with its co-chaperonin GroES, plays an essential role in assisting protein folding. The GroEL-GroES system forms a nano-cage that allows encapsulation of the non-native substrate proteins and provides a physical environment optimized to promote and accelerate protein folding. This chain is Chaperonin GroEL, found in Serratia proteamaculans (strain 568).